The sequence spans 1022 residues: Collagen alpha-1(I) chain (1022 aa).

The interval 1-1022 (SAGGISVPGP…PGPPGPPGPP (1022 aa)) is disordered. Pro-20, Pro-23, Pro-26, Pro-35, Pro-38, Pro-41, Pro-56, Pro-71, Pro-77, Pro-86, and Pro-92 each carry 4-hydroxyproline. Positions 28–47 (PQGFQGPPGEPGEPGASGPM) are enriched in low complexity. Residues 59–73 (NGDDGEAGKPGRPGE) show a composition bias toward basic and acidic residues. Lys-95 is subject to 5-hydroxylysine; alternate. Lys-95 is a glycosylation site (O-linked (Gal...) hydroxylysine; alternate). Ser-101 bears the Phosphoserine mark. Low complexity predominate over residues 109 to 125 (DAGPAGPKGEPGSPGEN). 4-hydroxyproline occurs at positions 119, 122, 128, 137, 143, 164, 173, 176, 203, 206, 218, 224, 233, 239, 242, and 257. Residues 143 to 161 (PGASGPAGARGNDGAAGAA) are compositionally biased toward low complexity. Over residues 163-175 (PPGPTGPAGPPGF) the composition is skewed to pro residues. Over residues 209–259 (AGAAGPAGNPGADGQPGAKGANGAPGIAGAPGFPGARGPSGPQGPSGAPGP) the composition is skewed to low complexity. Position 260 is a 5-hydroxylysine (Lys-260). 8 positions are modified to 4-hydroxyproline: Pro-266, Pro-269, Pro-281, Pro-290, Pro-305, Pro-311, Pro-320, and Pro-326. Gly residues predominate over residues 315–324 (GERGGPGSRG). At Lys-335 the chain carries 5-hydroxylysine. Residues Pro-344, Pro-353, Pro-359, Pro-365, Pro-374, Pro-377, Pro-386, Pro-395, Pro-401, Pro-413, Pro-422, Pro-431, Pro-434, Pro-452, Pro-470, Pro-476, Pro-482, Pro-488, Pro-494, Pro-500, Pro-512, Pro-521, Pro-533, Pro-545, Pro-548, Pro-554, Pro-560, and Pro-569 each carry the 4-hydroxyproline modification. The span at 368–394 (KGLTGSPGSPGPDGKTGPPGPAGQDGR) shows a compositional bias: low complexity. Positions 403–422 (ARGQAGVMGFPGPKGAAGEP) are enriched in low complexity. Low complexity predominate over residues 464-491 (QGPAGSPGFQGLPGPAGPPGEAGKPGEQ). The segment covering 530 to 557 (NGAPGNDGAKGDAGAPGAPGSQGAPGLQ) has biased composition (low complexity). Lys-581 carries the 5-hydroxylysine modification. Residues Pro-587, Pro-602, and Pro-608 each carry the 4-hydroxyproline modification. The segment covering 614 to 628 (SGPSGPAGPTGARGA) has biased composition (low complexity). Phosphoserine is present on Ser-617. 8 positions are modified to 4-hydroxyproline: Pro-629, Pro-635, Pro-638, Pro-647, Pro-653, Pro-671, Pro-680, and Pro-689. Low complexity predominate over residues 641 to 668 (AGFAGPPGADGQPGAKGEPGDAGAKGDA). Pro residues predominate over residues 670–682 (PPGPAGPTGPPGP). Lys-692 carries the 5-hydroxylysine modification. The span at 697 to 713 (SAGPPGATGFPGAAGRV) shows a compositional bias: low complexity. Residues Pro-701 and Pro-707 each carry the 4-hydroxyproline modification. A 3-hydroxyproline modification is found at Pro-715. 4-hydroxyproline is present on residues Pro-716, Pro-725, Pro-728, Pro-749, Pro-758, Pro-767, Pro-776, Pro-794, Pro-803, Pro-806, Pro-812, Pro-827, Pro-833, Pro-839, Pro-848, and Pro-854. The segment covering 742–751 (ETGPAGRPGE) has biased composition (low complexity). Residues 761–776 (TGEKGSPGADGPAGAP) are compositionally biased toward low complexity. A compositionally biased stretch (pro residues) spans 826–836 (PPGPVGPPGLA). Residues 838-853 (PPGESGREGSPGAEGS) show a composition bias toward low complexity. Lys-863 carries the post-translational modification 5-hydroxylysine. Positions 872-887 (AGPPGAPGAPGAPGPV) are enriched in pro residues. A 4-hydroxyproline mark is found at Pro-875, Pro-878, and Pro-881. Residues 908 to 922 (AGPAGARGPAGPQGP) show a composition bias toward low complexity. The span at 923 to 937 (RGDKGETGEQGDRGI) shows a compositional bias: basic and acidic residues. Residue Lys-926 is modified to 5-hydroxylysine. At Lys-938 the chain carries 5-hydroxylysine; alternate. An O-linked (Gal...) hydroxylysine; alternate glycan is attached at Lys-938. 4-hydroxyproline is present on residues Pro-953, Pro-956, Pro-974, and Pro-989. The segment covering 956-989 (PGEQGPSGASGPAGPRGPPGSAGSPGKDGLNGLP) has biased composition (low complexity). At Pro-994 the chain carries 3-hydroxyproline. Pro-995 is subject to 4-hydroxyproline. The segment covering 1007-1022 (VGPPGPPGPPGPPGPP) has biased composition (pro residues). Pro-1009 carries the post-translational modification 3-hydroxyproline. Position 1010 is a 4-hydroxyproline (Pro-1010). 3-hydroxyproline is present on Pro-1012. Pro-1013 bears the 4-hydroxyproline mark. Position 1015 is a 3-hydroxyproline (Pro-1015). 4-hydroxyproline occurs at positions 1016, 1019, and 1022.

This sequence belongs to the fibrillar collagen family. Trimers of one alpha 2(I) and two alpha 1(I) chains. In terms of processing, prolines at the third position of the tripeptide repeating unit (G-X-Y) are hydroxylated in some or all of the chains. As to expression, expressed in bone.

It is found in the secreted. The protein resides in the extracellular space. The protein localises to the extracellular matrix. Its function is as follows. Type I collagen is a member of group I collagen (fibrillar forming collagen). This is Collagen alpha-1(I) chain from Mylodon darwinii (Giant ground sloth).